The primary structure comprises 1298 residues: MLILRGAPALSAFRHGKLLEQLTQHVPAVTGLYAEFAHFADVTGALTADEEQVLARLLKYGPSVPVQEPSGRLFLVVPRFGTISPWSSKASDIARNCGLAKIDRLERGIAYYVQGELSESDAQQVAARLHDRMTQLVLDRLEGAAELFSHAQPRPLTAVDVLGGGRAALEKANVELGLALAEDEIDYLLKSFGELGRNPHDVELMMFAQANSEHCRHKIFNASWDIDGQAQDKSLFGMIKNTYEMNREGVLSAYKDNAAVIVGHVAGRFFPDPQTREYAASREPVQILMKVETHNHPTAIAPFPGASTGSGGEIRDEGATGRGAKPKAGLTGFTVSNLQIPGFEQPWEVPYGKPERIVTALDIMVEGPLGGAAFNNEFGRPALTGYFRTFEQKIATPHGEEVRGYHKPIMLAGGMGNIRDEHVQKGEISVGAKLIVLGGPAMLIGLGGGAASSMATGASSADLDFASVQRDNPEMERRCQEVIDRCWQLGERNPISFIHDVGAGGLSNALPELINDGGRGGRFELRAVPNDEPGMSPLEIWCNESQERYVLSVDAADFETFKAICERERCPFAVVGEAIEQRQLTVADSHFDNKPVDMPLEVLLGKAPRMHRAVTREAELGDDFDAAGLELQESVERVLRHPAVASKSFLITIGDRTITGLVARDQMVGPWQVPVADCAVTATSFDVYTGEAMAMGERTPLALLDAPASGRMAIGETVTNLAAARVGKLSDIKLSANWMAAAGHPGEDARLYDTVKAVGMELCPELGITIPVGKDSMSMKTRWQDNGEDKSVTSPVSLIVTGFAPVADVRQSLTPQLRLDKGETDLILIDLGRGKNRLGGSILAQVHGKLGRAVPDVDDAEDLKAFFAVIQGLNADGHILAYHDRSDGGLITSVLEMAFAGHCGVELNLDALADSREELAAVLFSEELGAVIQVREGATPEVLAQFSAAGLDDCVAVIGQPVNGYEINLNYNGETVYSAQRRILQRIWSETSYQIQRLRDNADCAEQEFDALLDEDNPGLSIKLSYDVNDDIAAPYIKKGVRPKVAILREQGVNGQVEMAAAFDRAGFAAIDVHMSDILAGRVDLDAFKGLVACGGFSYGDVLGAGEGWAKSILFNARARDGFQAFFARKDSFALGVCNGCQMMSNLHELIPGTEFWPHFVRNRSEQFEARVAMVQVQESSSIFLQGMAGSRLPIAIAHGEGHAEFESEEALLEADLSGCVSLRFVDNHGKVTEAYPANPNGSPRGITGLSSRDGRVTIMMPHPERVFRAVQNSWRPDDWQEDGGWLRMFRNARVWVD.

Residues 298-328 (TAIAPFPGASTGSGGEIRDEGATGRGAKPKA) are disordered. ATP contacts are provided by residues 305-316 (GASTGSGGEIRD), 384-386 (TGY), and Ala676. Mg(2+)-binding residues include Asp677, Glu716, Asn720, and Asp884. Ser886 lines the ATP pocket. The region spanning 1045-1298 (VAILREQGVN…MFRNARVWVD (254 aa)) is the Glutamine amidotransferase type-1 domain. Cys1138 functions as the Nucleophile in the catalytic mechanism. Active-site residues include His1263 and Glu1265.

This sequence in the N-terminal section; belongs to the FGAMS family. As to quaternary structure, monomer.

The protein resides in the cytoplasm. The catalysed reaction is N(2)-formyl-N(1)-(5-phospho-beta-D-ribosyl)glycinamide + L-glutamine + ATP + H2O = 2-formamido-N(1)-(5-O-phospho-beta-D-ribosyl)acetamidine + L-glutamate + ADP + phosphate + H(+). The protein operates within purine metabolism; IMP biosynthesis via de novo pathway; 5-amino-1-(5-phospho-D-ribosyl)imidazole from N(2)-formyl-N(1)-(5-phospho-D-ribosyl)glycinamide: step 1/2. Phosphoribosylformylglycinamidine synthase involved in the purines biosynthetic pathway. Catalyzes the ATP-dependent conversion of formylglycinamide ribonucleotide (FGAR) and glutamine to yield formylglycinamidine ribonucleotide (FGAM) and glutamate. The protein is Phosphoribosylformylglycinamidine synthase of Pseudomonas aeruginosa (strain ATCC 15692 / DSM 22644 / CIP 104116 / JCM 14847 / LMG 12228 / 1C / PRS 101 / PAO1).